The following is a 186-amino-acid chain: MINRSAGKDRDRSRSGDKELRINHKIKAREVRVIFDDGTQSVLPIEDAMRCARDAELDLVEVSPNVLPPVCKIIDYGKYKFHQGKRQKEQRKNQKIIKLKEVRMQPKIDTHDLDFKYRNILGFLKEGNKVKVTIRFRGRELAHTHLGYGILEGILERIGDANYILESPAKMEGKTMFLVIAPKSKK.

Residues 1 to 20 (MINRSAGKDRDRSRSGDKEL) are disordered.

The protein belongs to the IF-3 family. Monomer.

Its subcellular location is the cytoplasm. IF-3 binds to the 30S ribosomal subunit and shifts the equilibrium between 70S ribosomes and their 50S and 30S subunits in favor of the free subunits, thus enhancing the availability of 30S subunits on which protein synthesis initiation begins. This is Translation initiation factor IF-3 from Borrelia hermsii (strain HS1 / DAH).